Here is a 1111-residue protein sequence, read N- to C-terminus: Lysylphosphatidylglycerol biosynthesis bifunctional protein LysX (1111 aa).

Positions 1-612 (MTLTSPPRTR…VLHHDGTAPD (612 aa)) are phosphatidylglycerol lysyltransferase. The next 7 helical transmembrane spans lie at 18–38 (VPAAAGWTVGVIATLSLIASV), 60–80 (FPDTSFAWAFVLALLAGALAA), 84–104 (IAWWILLLYMVAAVGWNVADL), 118–138 (VIGLAFHLAAVAFLLLARPLF), 152–172 (GVLAAGMAVGVLVGWGLLELF), 209–229 (VNALLGLFGALALMAAAIVLF), and 308–328 (AWLALCGTYGWAPGVMGASVG). The tract at residues 613 to 1111 (MSGLRTDTAD…TLPFPLARPR (499 aa)) is lysine--tRNA ligase. Residues 674 to 747 (VAGRVLRIRD…GTRSLLVRHW (74 aa)) constitute a DNA-binding region (OB). Residues Asp1023 and Glu1030 each coordinate Mg(2+).

This sequence in the N-terminal section; belongs to the LPG synthetase family. In the C-terminal section; belongs to the class-II aminoacyl-tRNA synthetase family. It depends on Mg(2+) as a cofactor.

It localises to the cell membrane. It catalyses the reaction tRNA(Lys) + L-lysine + ATP = L-lysyl-tRNA(Lys) + AMP + diphosphate. It carries out the reaction L-lysyl-tRNA(Lys) + a 1,2-diacyl-sn-glycero-3-phospho-(1'-sn-glycerol) = a 1,2-diacyl-sn-glycero-3-phospho-1'-(3'-O-L-lysyl)-sn-glycerol + tRNA(Lys). Catalyzes the production of L-lysyl-tRNA(Lys)transfer and the transfer of a lysyl group from L-lysyl-tRNA(Lys) to membrane-bound phosphatidylglycerol (PG), which produces lysylphosphatidylglycerol (LPG), one of the components of the bacterial membrane with a positive net charge. LPG synthesis contributes to the resistance to cationic antimicrobial peptides (CAMPs) and likely protects M.tuberculosis against the CAMPs produced by competiting microorganisms (bacteriocins). In fact, the modification of anionic phosphatidylglycerol with positively charged L-lysine results in repulsion of the peptides. The chain is Lysylphosphatidylglycerol biosynthesis bifunctional protein LysX (lysX) from Mycobacterium sp. (strain JLS).